The sequence spans 129 residues: Small ribosomal subunit protein uS12 (129 aa).

A 3-methylthioaspartic acid modification is found at Asp89. The tract at residues Thr101–Lys129 is disordered.

The protein belongs to the universal ribosomal protein uS12 family. Part of the 30S ribosomal subunit. Contacts proteins S8 and S17. May interact with IF1 in the 30S initiation complex.

With S4 and S5 plays an important role in translational accuracy. Its function is as follows. Interacts with and stabilizes bases of the 16S rRNA that are involved in tRNA selection in the A site and with the mRNA backbone. Located at the interface of the 30S and 50S subunits, it traverses the body of the 30S subunit contacting proteins on the other side and probably holding the rRNA structure together. The combined cluster of proteins S8, S12 and S17 appears to hold together the shoulder and platform of the 30S subunit. The chain is Small ribosomal subunit protein uS12 from Chlorobium luteolum (strain DSM 273 / BCRC 81028 / 2530) (Pelodictyon luteolum).